A 2279-amino-acid chain; its full sequence is Zinc finger protein 318 (2279 aa).

Low complexity-rich tracts occupy residues 1 to 12 and 25 to 39; these read MYRSSARSSVSS and SGRSSGSSSGPARRS. Disordered regions lie at residues 1–140 and 164–189; these read MYRS…PGLC and RRRLSDRLGSPVDNLEDMDRDDLTDD. The segment at 1-1092 is interaction with AR; that stretch reads MYRSSARSSV…THMHNKKHTQ (1092 aa). S40 is subject to Phosphoserine. The segment covering 53–67 has biased composition (basic residues); sequence PARRPRSPSGHRGRR. 2 positions are modified to phosphoserine: S79 and S81. Residues 110 to 132 show a composition bias toward basic and acidic residues; the sequence is SRGESRADYARDGRGDHPGDSGS. Residues S136 and S173 each carry the phosphoserine modification. A compositionally biased stretch (acidic residues) spans 177-188; that stretch reads NLEDMDRDDLTD. Y205 bears the Phosphotyrosine mark. Phosphoserine is present on residues S207 and S214. Disordered regions lie at residues 279-346 and 397-416; these read TVKI…DGGG and LESFSSSTSSSQDHPLYSGH. Residues 311-333 are compositionally biased toward basic and acidic residues; that stretch reads LDPEFRELDLARRKREEEEERSR. Residues 315 to 343 are a coiled coil; sequence FRELDLARRKREEEEERSRSLSQELVGVD. A phosphoserine mark is found at S464, S472, S501, and S527. 2 disordered regions span residues 514 to 533 and 540 to 570; these read LADSTSTQEKRRRSFPDIED and GDEEEDLKAESVPKPLGSSESEVMRQKASSL. Residues K547, K553, K566, and K578 each participate in a glycyl lysine isopeptide (Lys-Gly) (interchain with G-Cter in SUMO2) cross-link. Over residues 664 to 683 the composition is skewed to basic and acidic residues; sequence FSADRRSSDPHRLESREAHH. The tract at residues 664–709 is disordered; sequence FSADRRSSDPHRLESREAHHSNTHSPEVSHPHPPSPVDPYLLTKNS. The residue at position 842 (T842) is a Phosphothreonine. The stretch at 876-980 forms a coiled coil; sequence EKISDEKNRA…SELDKVAQIL (105 aa). 2 stretches are compositionally biased toward basic and acidic residues: residues 922–941 and 989–1012; these read QQGEMLRKKRREKDGHKDPL and QKSLSDSREPTEKPGKAEKSKSPE. 2 disordered regions span residues 922–942 and 989–1051; these read QQGEMLRKKRREKDGHKDPLL and QKSL…TKQL. S1010 carries the post-translational modification Phosphoserine. A compositionally biased stretch (low complexity) spans 1013–1023; that stretch reads KVSSFSNSSSN. The segment covering 1024–1034 has biased composition (basic and acidic residues); the sequence is KESKVNNEKFR. Phosphoserine is present on S1037. 2 consecutive Matrin-type zinc fingers follow at residues 1063 to 1097 and 1136 to 1166; these read AGNHWCKDCNTICGTMFDFFTHMHNKKHTQTLDPY and FYCQLCEEFLGDPISGEQHVKGHQHNEKYKK. 5 stretches are compositionally biased toward basic and acidic residues: residues 1195–1235, 1242–1251, 1258–1267, 1279–1288, and 1296–1316; these read RRQS…KLED, NSPEKAENKR, QLKEEVKKES, KKPEKEEEKS, and SKEEILESSKDKEDGKTEAGK. The disordered stretch occupies residues 1195 to 1319; that stretch reads RRQSELKRKL…GKTEAGKAKP (125 aa). 2 positions are modified to phosphoserine: S1243 and S1267. S1420 is modified (phosphoserine). Disordered stretches follow at residues 1428 to 1463, 1577 to 1628, 1702 to 1735, and 1753 to 1775; these read AEKSEPSHLPEQILPPPPPPPPPPPPPPPVIPHPAA, GKGA…EELH, SSFQSDTSRDISPEKSELDLGEPGPPGVEPPPQL, and ESVNQDKESQELRKSEDCRESEI. A compositionally biased stretch (pro residues) spans 1440 to 1462; that stretch reads ILPPPPPPPPPPPPPPPVIPHPA. Residues 1602–1623 are compositionally biased toward low complexity; the sequence is SNLSRTKSSDTSSTSPLNSSAS. A compositionally biased stretch (basic and acidic residues) spans 1708–1719; that stretch reads TSRDISPEKSEL. At S1713 the chain carries Phosphoserine. Pro residues predominate over residues 1724–1734; it reads PGPPGVEPPPQ. Positions 1768-1792 form a coiled coil; it reads EDCRESEIETNTELKERVKELSEGI. Phosphoserine occurs at positions 1856, 1896, 1971, 2030, 2035, 2091, 2101, 2189, 2192, and 2243. A disordered region spans residues 2252–2279; that stretch reads DNMVPQGMPEQETTVGAIQDHTESSVHN.

As to quaternary structure, homodimer. Heterodimer of isoform 1 and isoform 2. Isoform 1 and isoform 2 interact with AR. As to expression, expressed in endocrine tissue.

Its subcellular location is the nucleus. In terms of biological role, acts as a transcriptional corepressor for AR-mediated transactivation function. May act as a transcriptional regulator during spermatogenesis and, in particular, during meiotic division. Its function is as follows. Acts as a transcriptional coactivator for AR-mediated transactivation function. May act as a transcriptional regulator during spermatogenesis and, in particular, during meiotic division. In Homo sapiens (Human), this protein is Zinc finger protein 318 (ZNF318).